A 449-amino-acid chain; its full sequence is Probable magnetosome protein Mms48 (449 aa).

The N-terminal stretch at 1 to 18 (MLLRLIVLLIFMSPVVFA) is a signal peptide. A helical transmembrane segment spans residues 40–60 (SNMPVLLAVILVVFLIFSALS). The stretch at 323–356 (PDGHLAAGEAAFAVQKWGVARRHIMAALKIAPDA) is one TPR repeat.

It localises to the magnetosome membrane. In terms of biological role, overexpression in wild-type cells increases the number of cells with double magnetosome chains significantly. The 4 genes of this operon collectively influence magnetosome size and number. The chain is Probable magnetosome protein Mms48 from Magnetospirillum gryphiswaldense (strain DSM 6361 / JCM 21280 / NBRC 15271 / MSR-1).